A 198-amino-acid chain; its full sequence is NAD(P)H dehydrogenase (quinone) (198 aa).

The Flavodoxin-like domain maps to 4 to 190; it reads VLVLYYSAYG…EGAKYQGAHV (187 aa). Residues 10–15 and 78–80 each bind FMN; these read SAYGHI and TRF. Tyrosine 12 is a binding site for NAD(+). A substrate-binding site is contributed by tryptophan 98. Residues 113–119 and histidine 134 contribute to the FMN site; that span reads SSATQHG.

This sequence belongs to the WrbA family. The cofactor is FMN.

The catalysed reaction is a quinone + NADH + H(+) = a quinol + NAD(+). It carries out the reaction a quinone + NADPH + H(+) = a quinol + NADP(+). This Rhizobium johnstonii (strain DSM 114642 / LMG 32736 / 3841) (Rhizobium leguminosarum bv. viciae) protein is NAD(P)H dehydrogenase (quinone).